Here is a 195-residue protein sequence, read N- to C-terminus: Probable DNA-directed RNA polymerase subunit delta (195 aa).

Residues 14-81 form the HTH HARE-type domain; it reads LSMIEVAHAI…GDNTWGLRAW (68 aa). The disordered stretch occupies residues 91-195; it reads TVGETEDEED…DEEDKEDDEE (105 aa). Acidic residues-rich tracts occupy residues 116-171 and 179-195; these read TDDD…EDQL and FGDDEEEDEEDKEDDEE.

Belongs to the RpoE family. As to quaternary structure, RNAP is composed of a core of 2 alpha, a beta and a beta' subunits. The core is associated with a delta subunit and one of several sigma factors.

Its function is as follows. Participates in both the initiation and recycling phases of transcription. In the presence of the delta subunit, RNAP displays an increased specificity of transcription, a decreased affinity for nucleic acids, and an increased efficiency of RNA synthesis because of enhanced recycling. The protein is Probable DNA-directed RNA polymerase subunit delta of Limosilactobacillus fermentum (strain NBRC 3956 / LMG 18251) (Lactobacillus fermentum).